Here is a 461-residue protein sequence, read N- to C-terminus: MPMLKIYNSITRQKQEFKPITPGKVGMYVCGVTVYDLCHIGHGRTFVSFDMIVRYLRYAGYEVNFQRNITDIDDKIIKRANENQEDCNTLTDRLIGEMHKDFDALNMIRPDFEPRATLHITEIIDMVERLLARGHAYVAADGDVLFSVASFPEYGRLSGQNLEQLQAGARVEVDDNKQNPMDFVLWKMSKPGEPTWESPWGPGRPGWHIECSAMNSKHLGLHFDIHGGGSDLQFPHHENEIAQSCCAHDTPYVNYWMHTGMVMVDREKMSKSLGNFFTIRDVLGHYDPETVRYFLLSGHYRSQINYSEENLKQARAALERLYTAIKDVDLTVAPAPAEEFVAKFKAAMDDDFNTPEAYSVLFDMVREINRLKTTDMAQASAMAVAMKQLADVLGLLHQAPDAFFKGEGSDDEVAEIEALIVERNRARVEKDWPAADVARNRLNELGVVLEDGPSGTTWRKK.

C30 serves as a coordination point for Zn(2+). The 'HIGH' region signature appears at 32 to 42; that stretch reads VTVYDLCHIGH. Residues C211, H236, and E240 each coordinate Zn(2+). Residues 268-272 carry the 'KMSKS' region motif; it reads KMSKS. K271 contacts ATP.

This sequence belongs to the class-I aminoacyl-tRNA synthetase family. As to quaternary structure, monomer. It depends on Zn(2+) as a cofactor.

It localises to the cytoplasm. It catalyses the reaction tRNA(Cys) + L-cysteine + ATP = L-cysteinyl-tRNA(Cys) + AMP + diphosphate. The sequence is that of Cysteine--tRNA ligase from Shewanella sp. (strain MR-4).